Consider the following 371-residue polypeptide: MSTSAPINRRLTKKIYVGDVAIGGDAPISVQSMTNTDTCDVAATVAQIERCVEAGADLMRVSTPTMDTVKAFGEIRKLVSVPLIADVHFDHKIALAVAAAGADCLRINPGNIGSDAKVREVVACAKHYNIPIRIGVNAGSLEKDIQRKYKEPNGAAMLESAMRHIDILERLNFDQYKVSVKASNVFLTMDAYRLISAQIDNPLHLGVTEAGVYRTGSVKSAIALGGLLLDGIGDTIRISLAAEPEEEIKIGFDILKSLNIRSNGVNFIACPSCSRQEFDVIRVMTALESRLEDIREPMNLSVIGCKVNGPGEAKEADIGIVGAAPKSLVYRMGEKSHLIDTDNLVDEIEGMVRAHAEELAKKRENEIIRVR.

Cys-270, Cys-273, Cys-305, and Glu-312 together coordinate [4Fe-4S] cluster.

The protein belongs to the IspG family. It depends on [4Fe-4S] cluster as a cofactor.

It catalyses the reaction (2E)-4-hydroxy-3-methylbut-2-enyl diphosphate + oxidized [flavodoxin] + H2O + 2 H(+) = 2-C-methyl-D-erythritol 2,4-cyclic diphosphate + reduced [flavodoxin]. Its pathway is isoprenoid biosynthesis; isopentenyl diphosphate biosynthesis via DXP pathway; isopentenyl diphosphate from 1-deoxy-D-xylulose 5-phosphate: step 5/6. Converts 2C-methyl-D-erythritol 2,4-cyclodiphosphate (ME-2,4cPP) into 1-hydroxy-2-methyl-2-(E)-butenyl 4-diphosphate. This Psychrobacter arcticus (strain DSM 17307 / VKM B-2377 / 273-4) protein is 4-hydroxy-3-methylbut-2-en-1-yl diphosphate synthase (flavodoxin).